The chain runs to 128 residues: Fluoride-specific ion channel FluC (128 aa).

The next 4 membrane-spanning stretches (helical) occupy residues 5–25 (LFISCGAILGASLRWAIGLLF), 34–54 (FGTLIANLFGCLIIGVLLGLF), 67–87 (FLITGFLGSLTTFSSFSSEVV), and 99–119 (FCVLMMHLFGCLAMTVLGIWI). Na(+) contacts are provided by Gly74 and Thr77.

The protein belongs to the fluoride channel Fluc/FEX (TC 1.A.43) family.

It is found in the cell inner membrane. The enzyme catalyses fluoride(in) = fluoride(out). Its activity is regulated as follows. Na(+) is not transported, but it plays an essential structural role and its presence is essential for fluoride channel function. Fluoride-specific ion channel. Important for reducing fluoride concentration in the cell, thus reducing its toxicity. The sequence is that of Fluoride-specific ion channel FluC from Haemophilus influenzae (strain PittGG).